The primary structure comprises 1337 residues: Zinc finger protein 335 (1337 aa).

Disordered regions lie at residues 1 to 108 (MEEN…LVHS) and 198 to 226 (GPTS…PPAP). Low complexity-rich tracts occupy residues 31–45 (TSEA…AATV) and 54–63 (SGVGQSSDGG). Residues 248 to 271 (FKCKMCQYRSSTKATLLRHMRERH) form a C2H2-type 1 zinc finger. The tract at residues 278–444 (AAAAATGKRG…PPRRRGRPSR (167 aa)) is disordered. Over residues 302 to 332 (DRPEEEEEDDDIVDAGAIDDLEEDSDYNPAE) the composition is skewed to acidic residues. Residues 351–362 (RPRRRPGRPRKL) show a composition bias toward basic residues. The segment covering 363 to 372 (PRLETSDLHD) has biased composition (basic and acidic residues). Positions 378–388 (LVSSQSTQSPP) are enriched in polar residues. 8 C2H2-type zinc fingers span residues 466 to 488 (YLCR…VNSH), 496 to 518 (FRCL…MFNH), 524 to 546 (YKCD…AAVH), 563 to 585 (FPCP…MKTH), 591 to 613 (HMCD…LLTH), 622 to 644 (FKCE…QLSH), 650 to 673 (FKCS…AVKH), and 679 to 702 (FACE…RCRH). Disordered regions lie at residues 733–767 (LKQQ…TPPL) and 963–999 (QCGG…ASHT). Pro residues predominate over residues 741 to 756 (PGPPLSSPGPEAPQEP). 2 positions are modified to phosphoserine: Ser-976 and Ser-1007. 4 C2H2-type zinc fingers span residues 1019–1041 (FSCK…KRAH), 1047–1069 (FKCP…MAQH), 1075–1097 (HQCN…MLTH), and 1103–1126 (FSCH…QRLH). Residue Lys-1022 forms a Glycyl lysine isopeptide (Lys-Gly) (interchain with G-Cter in SUMO2) linkage. A Phosphoserine modification is found at Ser-1149.

This sequence belongs to the krueppel C2H2-type zinc-finger protein family. Interacts with NCOA6; may enhance ligand-dependent transcriptional activation by nuclear hormone receptors. Interacts with CNOT6. Interacts with CNOT9; the interaction is direct. Component of a nuclear receptor-mediated transcription complex composed of at least ZNF335, CCAR2 and EMSY; the complex stimulates the transcription of nuclear receptor target genes such as SOX9 and HOXA1. Within the complex interacts with EMSY and interacts (via C-terminus) with CCAR2. Interacts with members of histone H3'Lys4'(H3K4) methyltransferase complexes ASH2L, CXXC1, KMT2A/MLL1, RBBP5, SETD1A and WDR5. Component of a histone methylation complex composed of at least ZNF335, RBBP5, ASH2L and WDR5; the complex may have histone H3-specific methyltransferase activity, however does not have specificity for 'Lys-4' of histone H3. Interacts with RBBP5 and WDR5. Interacts with ASHL2. Components of this complex may associate with components of the ZNF335-CCAR2-EMSY nuclear receptor-mediated transcription complex to form a complex at least composed of ZNF335, HCFC1, CCAR2, EMSY, MKI67, RBBP5, ASH2L and WDR5. Within this complex also interacts with HCFC1 and MKI67. As to expression, expressed at low levels in cerebral cortex, hippocampus and cerebellum (at protein level).

Its subcellular location is the nucleus. Component or associated component of some histone methyltransferase complexes may regulate transcription through recruitment of those complexes on gene promoters. Enhances ligand-dependent transcriptional activation by nuclear hormone receptors. Plays an important role in neural progenitor cell proliferation and self-renewal through the regulation of specific genes involved brain development, including REST. Also controls the expression of genes involved in somatic development and regulates, for instance, lymphoblast proliferation. This is Zinc finger protein 335 (Znf335) from Mus musculus (Mouse).